The primary structure comprises 418 residues: Putative ion-transport protein YfeO (418 aa).

The next 12 helical transmembrane spans lie at 10–30 (LLLS…LIVV), 54–74 (DSPF…GLVI), 99–119 (ALLG…SLGP), 120–140 (EHPI…RLLP), 149–169 (ILAS…AALI), 186–206 (LFAP…FFHP), 223–243 (ILSG…AVWC), 258–278 (VLVL…GGPV), 300–320 (DYFL…ASGF), 322–342 (GGRI…LHEH), 343–363 (VPAV…VLVV), and 371–391 (LFMA…CIVM).

This sequence belongs to the chloride channel (TC 2.A.49) family.

Its subcellular location is the cell membrane. The protein is Putative ion-transport protein YfeO of Escherichia coli O17:K52:H18 (strain UMN026 / ExPEC).